Reading from the N-terminus, the 420-residue chain is Serine/threonine transporter SstT (420 aa).

9 helical membrane-spanning segments follow: residues 14–34 (IMIGIVIGTTLGFLVPEWTFI), 40–60 (LFVGALKAIAPILVFVLIIAS), 71–91 (YVGSILVVYLLATFLAAVVAV), 172–192 (ITTVVQMIIGIAPIGILGLVF), 210–230 (LLLLIGTMAVVALVVYPAIVF), 283–303 (IPLGATINMGGAAITITIMTL), 309–329 (LGMSVPIYLALLLSIIAAVSA), 332–352 (ASGIAGGSLLLIPLACSLFGI), and 356–376 (IAMQVVGVGFIVGVVQDSIET).

Belongs to the dicarboxylate/amino acid:cation symporter (DAACS) (TC 2.A.23) family.

Its subcellular location is the cell membrane. It catalyses the reaction L-serine(in) + Na(+)(in) = L-serine(out) + Na(+)(out). It carries out the reaction L-threonine(in) + Na(+)(in) = L-threonine(out) + Na(+)(out). Functionally, involved in the import of serine and threonine into the cell, with the concomitant import of sodium (symport system). This is Serine/threonine transporter SstT from Enterococcus faecalis (strain ATCC 700802 / V583).